The sequence spans 770 residues: DNA topoisomerase 1 (770 aa).

The Toprim domain occupies 4-140; that stretch reads FRIIIAEKAD…EIRRAKFSAL (137 aa). The Mg(2+) site is built by glutamate 10 and aspartate 109. The Topo IA-type catalytic domain occupies 156 to 563; the sequence is NYSLADAADA…ESKKMLHEVL (408 aa). The tract at residues 194 to 199 is interaction with DNA; sequence SAGRVQ. The O-(5'-phospho-DNA)-tyrosine intermediate role is filled by tyrosine 312. 3 consecutive C4-type zinc fingers follow at residues 611-638, 673-700, and 719-744; these read CEDPSCKINFRIKRNGSITLSDQKCPVC, CPADHGRLVLRQSKYGKRFLGCSNYPKC, and CPYCGAPILALSRNGRKWKFCPNMQC.

It belongs to the type IA topoisomerase family. In terms of assembly, monomer. Mg(2+) serves as cofactor.

It catalyses the reaction ATP-independent breakage of single-stranded DNA, followed by passage and rejoining.. Functionally, releases the supercoiling and torsional tension of DNA, which is introduced during the DNA replication and transcription, by transiently cleaving and rejoining one strand of the DNA duplex. Introduces a single-strand break via transesterification at a target site in duplex DNA. The scissile phosphodiester is attacked by the catalytic tyrosine of the enzyme, resulting in the formation of a DNA-(5'-phosphotyrosyl)-enzyme intermediate and the expulsion of a 3'-OH DNA strand. The free DNA strand then undergoes passage around the unbroken strand, thus removing DNA supercoils. Finally, in the religation step, the DNA 3'-OH attacks the covalent intermediate to expel the active-site tyrosine and restore the DNA phosphodiester backbone. This Thermoplasma acidophilum (strain ATCC 25905 / DSM 1728 / JCM 9062 / NBRC 15155 / AMRC-C165) protein is DNA topoisomerase 1.